A 34-amino-acid chain; its full sequence is Sperm protein EM1 (34 aa).

Residues 1 to 17 (AGSKSRSRSRSRSRSKS) are compositionally biased toward basic residues. The interval 1-34 (AGSKSRSRSRSRSRSKSPAKSASPKSAASPRASR) is disordered. Tandem repeats lie at residues 3–4 (SK), 5–6 (SR), 7–8 (SR), 9–10 (SR), 11–12 (SR), 13–14 (SR), and 15–16 (SK). Residues 3-16 (SKSRSRSRSRSRSK) form a 7 X 2 AA tandem repeats of S-[KR] region. Low complexity predominate over residues 18 to 34 (PAKSASPKSAASPRASR).

As to expression, sperm.

The protein localises to the nucleus. The chain is Sperm protein EM1 from Ensis minor (Razor shell).